The sequence spans 105 residues: U-scoloptoxin(05)-Sa2a (105 aa).

The first 24 residues, 1–24 (MKEAVKMSCLCIFLFLFLFSLTDA), serve as a signal peptide directing secretion. Residues 79-105 (HVPESNQKDGKVSTHMSSCNTDGCNAN) are disordered. Residues 92–105 (THMSSCNTDGCNAN) are compositionally biased toward polar residues.

This sequence belongs to the scoloptoxin-05 family. Contains 4 disulfide bonds. In terms of tissue distribution, expressed by the venom gland.

The protein localises to the secreted. In Scolopendra alternans (Florida Keys giant centipede), this protein is U-scoloptoxin(05)-Sa2a.